The chain runs to 102 residues: Small ribosomal subunit protein uS10 (102 aa).

It belongs to the universal ribosomal protein uS10 family. In terms of assembly, part of the 30S ribosomal subunit.

Its function is as follows. Involved in the binding of tRNA to the ribosomes. This chain is Small ribosomal subunit protein uS10, found in Methanoregula boonei (strain DSM 21154 / JCM 14090 / 6A8).